A 138-amino-acid polypeptide reads, in one-letter code: Type II secretion system protein I (138 aa).

Positions Met-1 to Gly-6 are cleaved as a propeptide — leader sequence. Residue Tyr-7 is modified to N-methyltyrosine. The chain crosses the membrane as a helical span at residues Tyr-7–Ser-29.

This sequence belongs to the GSP I family. Type II secretion is composed of four main components: the outer membrane complex, the inner membrane complex, the cytoplasmic secretion ATPase and the periplasm-spanning pseudopilus. Interacts with core component XpsG. Cleaved by prepilin peptidase. Post-translationally, methylated by prepilin peptidase at the amino group of the N-terminal tyrosine once the leader sequence is cleaved by prepilin peptidase.

The protein localises to the cell inner membrane. In terms of biological role, component of the type II secretion system required for the energy-dependent secretion of extracellular factors such as proteases and toxins from the periplasm. Part of the pseudopilus tip complex that is critical for the recognition and binding of secretion substrates. The sequence is that of Type II secretion system protein I (xpsI) from Xanthomonas campestris pv. campestris (strain ATCC 33913 / DSM 3586 / NCPPB 528 / LMG 568 / P 25).